A 1398-amino-acid chain; its full sequence is DNA-directed RNA polymerase subunit beta' (1398 aa).

C70, C72, C85, and C88 together coordinate Zn(2+). Positions 460, 462, and 464 each coordinate Mg(2+). 4 residues coordinate Zn(2+): C814, C888, C895, and C898.

This sequence belongs to the RNA polymerase beta' chain family. The RNAP catalytic core consists of 2 alpha, 1 beta, 1 beta' and 1 omega subunit. When a sigma factor is associated with the core the holoenzyme is formed, which can initiate transcription. It depends on Mg(2+) as a cofactor. The cofactor is Zn(2+).

The enzyme catalyses RNA(n) + a ribonucleoside 5'-triphosphate = RNA(n+1) + diphosphate. Functionally, DNA-dependent RNA polymerase catalyzes the transcription of DNA into RNA using the four ribonucleoside triphosphates as substrates. The polypeptide is DNA-directed RNA polymerase subunit beta' (Pseudomonas putida (Arthrobacter siderocapsulatus)).